The following is a 341-amino-acid chain: tRNA N6-adenosine threonylcarbamoyltransferase (341 aa).

Fe cation is bound by residues H111 and H115. Substrate-binding positions include 134-138, D167, G180, and N276; that span reads LVSGG. Fe cation is bound at residue D304.

This sequence belongs to the KAE1 / TsaD family. Requires Fe(2+) as cofactor.

The protein localises to the cytoplasm. It catalyses the reaction L-threonylcarbamoyladenylate + adenosine(37) in tRNA = N(6)-L-threonylcarbamoyladenosine(37) in tRNA + AMP + H(+). Functionally, required for the formation of a threonylcarbamoyl group on adenosine at position 37 (t(6)A37) in tRNAs that read codons beginning with adenine. Is involved in the transfer of the threonylcarbamoyl moiety of threonylcarbamoyl-AMP (TC-AMP) to the N6 group of A37, together with TsaE and TsaB. TsaD likely plays a direct catalytic role in this reaction. This Pseudomonas entomophila (strain L48) protein is tRNA N6-adenosine threonylcarbamoyltransferase.